Here is a 391-residue protein sequence, read N- to C-terminus: Formate-dependent phosphoribosylglycinamide formyltransferase (391 aa).

N(1)-(5-phospho-beta-D-ribosyl)glycinamide-binding positions include 20–21 and Glu-80; that span reads EL. ATP-binding positions include Arg-112, Lys-153, 158-163, 193-196, and Glu-201; these read SSGKGQ and EGFI. Residues 117–306 enclose the ATP-grasp domain; the sequence is RLAAETLGLP…EFALHVRAIL (190 aa). Positions 265 and 277 each coordinate Mg(2+). Residues Asp-284, Lys-354, and 361 to 362 contribute to the N(1)-(5-phospho-beta-D-ribosyl)glycinamide site; that span reads RR.

It belongs to the PurK/PurT family. Homodimer.

It carries out the reaction N(1)-(5-phospho-beta-D-ribosyl)glycinamide + formate + ATP = N(2)-formyl-N(1)-(5-phospho-beta-D-ribosyl)glycinamide + ADP + phosphate + H(+). It participates in purine metabolism; IMP biosynthesis via de novo pathway; N(2)-formyl-N(1)-(5-phospho-D-ribosyl)glycinamide from N(1)-(5-phospho-D-ribosyl)glycinamide (formate route): step 1/1. Its function is as follows. Involved in the de novo purine biosynthesis. Catalyzes the transfer of formate to 5-phospho-ribosyl-glycinamide (GAR), producing 5-phospho-ribosyl-N-formylglycinamide (FGAR). Formate is provided by PurU via hydrolysis of 10-formyl-tetrahydrofolate. This is Formate-dependent phosphoribosylglycinamide formyltransferase from Shewanella sp. (strain MR-7).